Reading from the N-terminus, the 270-residue chain is NAD kinase (270 aa).

The active-site Proton acceptor is the Asp49. Residues 49 to 50 (DG), Arg54, 126 to 127 (NE), Arg152, Asp154, 165 to 170 (TAYNKS), Ala189, and Gln227 each bind NAD(+).

It belongs to the NAD kinase family. The cofactor is a divalent metal cation.

Its subcellular location is the cytoplasm. The enzyme catalyses NAD(+) + ATP = ADP + NADP(+) + H(+). Functionally, involved in the regulation of the intracellular balance of NAD and NADP, and is a key enzyme in the biosynthesis of NADP. Catalyzes specifically the phosphorylation on 2'-hydroxyl of the adenosine moiety of NAD to yield NADP. This chain is NAD kinase, found in Lactococcus lactis subsp. lactis (strain IL1403) (Streptococcus lactis).